The chain runs to 597 residues: Elongation factor 4 (597 aa).

The region spanning 4-181 (SKIRNFSIIA…AIVDYVPAPK (178 aa)) is the tr-type G domain. GTP is bound by residues 16–21 (DHGKST) and 128–131 (NKID).

It belongs to the TRAFAC class translation factor GTPase superfamily. Classic translation factor GTPase family. LepA subfamily.

The protein localises to the cell membrane. The enzyme catalyses GTP + H2O = GDP + phosphate + H(+). Required for accurate and efficient protein synthesis under certain stress conditions. May act as a fidelity factor of the translation reaction, by catalyzing a one-codon backward translocation of tRNAs on improperly translocated ribosomes. Back-translocation proceeds from a post-translocation (POST) complex to a pre-translocation (PRE) complex, thus giving elongation factor G a second chance to translocate the tRNAs correctly. Binds to ribosomes in a GTP-dependent manner. The polypeptide is Elongation factor 4 (Mycoplasmopsis agalactiae (strain NCTC 10123 / CIP 59.7 / PG2) (Mycoplasma agalactiae)).